We begin with the raw amino-acid sequence, 201 residues long: Proteasome subunit beta type-2 (201 aa).

Residue Met1 is modified to N-acetylmethionine.

The protein belongs to the peptidase T1B family. The 26S proteasome consists of a 20S proteasome core and two 19S regulatory subunits. The 20S proteasome core is a barrel-shaped complex made of 28 subunits that are arranged in four stacked rings. The two outer rings are each formed by seven alpha subunits, and the two inner rings are formed by seven beta subunits. The proteolytic activity is exerted by three beta-subunits PSMB5, PSMB6 and PSMB7. As to expression, detected in liver (at protein level).

The protein localises to the cytoplasm. It localises to the nucleus. Functionally, non-catalytic component of the 20S core proteasome complex involved in the proteolytic degradation of most intracellular proteins. This complex plays numerous essential roles within the cell by associating with different regulatory particles. Associated with two 19S regulatory particles, forms the 26S proteasome and thus participates in the ATP-dependent degradation of ubiquitinated proteins. The 26S proteasome plays a key role in the maintenance of protein homeostasis by removing misfolded or damaged proteins that could impair cellular functions, and by removing proteins whose functions are no longer required. Associated with the PA200 or PA28, the 20S proteasome mediates ubiquitin-independent protein degradation. This type of proteolysis is required in several pathways including spermatogenesis (20S-PA200 complex) or generation of a subset of MHC class I-presented antigenic peptides (20S-PA28 complex). This chain is Proteasome subunit beta type-2 (Psmb2), found in Mus musculus (Mouse).